The chain runs to 227 residues: Ribosomal RNA small subunit methyltransferase G (227 aa).

S-adenosyl-L-methionine contacts are provided by residues glycine 74, leucine 79, alanine 124–glutamate 125, and arginine 142.

It belongs to the methyltransferase superfamily. RNA methyltransferase RsmG family.

Its subcellular location is the cytoplasm. In terms of biological role, specifically methylates the N7 position of guanine in position 518 of 16S rRNA. The sequence is that of Ribosomal RNA small subunit methyltransferase G from Mycolicibacterium gilvum (strain PYR-GCK) (Mycobacterium gilvum (strain PYR-GCK)).